The following is a 445-amino-acid chain: Chromosomal replication initiator protein DnaA (445 aa).

A domain I, interacts with DnaA modulators region spans residues 1–73; the sequence is MSTHLTETWE…VNALKLLTSK (73 aa). The tract at residues 73–106 is domain II; the sequence is KKYNIDFIVTTEEKIEKNHNNEKSNIVVNDEMST. The segment at 107–323 is domain III, AAA+ region; that stretch reads MLNPKYTFDS…GALIRIVAFS (217 aa). G151, G153, K154, and T155 together coordinate ATP. Positions 324-445 are domain IV, binds dsDNA; it reads SLTNKEISVD…KELNKRINQK (122 aa).

This sequence belongs to the DnaA family. In terms of assembly, oligomerizes as a right-handed, spiral filament on DNA at oriC.

The protein localises to the cytoplasm. Functionally, plays an essential role in the initiation and regulation of chromosomal replication. ATP-DnaA binds to the origin of replication (oriC) to initiate formation of the DNA replication initiation complex once per cell cycle. Binds the DnaA box (a 9 base pair repeat at the origin) and separates the double-stranded (ds)DNA. Forms a right-handed helical filament on oriC DNA; dsDNA binds to the exterior of the filament while single-stranded (ss)DNA is stabiized in the filament's interior. The ATP-DnaA-oriC complex binds and stabilizes one strand of the AT-rich DNA unwinding element (DUE), permitting loading of DNA polymerase. After initiation quickly degrades to an ADP-DnaA complex that is not apt for DNA replication. Binds acidic phospholipids. This Clostridium botulinum (strain Okra / Type B1) protein is Chromosomal replication initiator protein DnaA.